The sequence spans 193 residues: MNPLNPSSDGIKENLLTLLAQKAYRFGDFSLASGKKSSHYVNCKPVSLSGPGLLSISSLFLKQINESDSGVAGLTLGADPLVSGVVILAAQSGIDLNGLIVRKEAKGHGTGAWLEGPLPPKGSVITVLEDVVTTGGSSLKAVEQLRNQGYLVKQVLAIVDREEGGLDAISKADLELNSLFFLKEIVERANSLQ.

Residues R102, K103, K106, H108, and 129 to 137 (EDVVTTGGS) contribute to the 5-phospho-alpha-D-ribose 1-diphosphate site. Positions 133 and 161 each coordinate orotate.

The protein belongs to the purine/pyrimidine phosphoribosyltransferase family. PyrE subfamily. Homodimer. It depends on Mg(2+) as a cofactor.

The catalysed reaction is orotidine 5'-phosphate + diphosphate = orotate + 5-phospho-alpha-D-ribose 1-diphosphate. It participates in pyrimidine metabolism; UMP biosynthesis via de novo pathway; UMP from orotate: step 1/2. Catalyzes the transfer of a ribosyl phosphate group from 5-phosphoribose 1-diphosphate to orotate, leading to the formation of orotidine monophosphate (OMP). In Prochlorococcus marinus (strain NATL1A), this protein is Orotate phosphoribosyltransferase.